The sequence spans 180 residues: Large ribosomal subunit protein uL5 (180 aa).

It belongs to the universal ribosomal protein uL5 family. In terms of assembly, part of the 50S ribosomal subunit; part of the 5S rRNA/L5/L18/L25 subcomplex. Contacts the 5S rRNA and the P site tRNA. Forms a bridge to the 30S subunit in the 70S ribosome.

In terms of biological role, this is one of the proteins that bind and probably mediate the attachment of the 5S RNA into the large ribosomal subunit, where it forms part of the central protuberance. In the 70S ribosome it contacts protein S13 of the 30S subunit (bridge B1b), connecting the 2 subunits; this bridge is implicated in subunit movement. Contacts the P site tRNA; the 5S rRNA and some of its associated proteins might help stabilize positioning of ribosome-bound tRNAs. This chain is Large ribosomal subunit protein uL5, found in Synechocystis sp. (strain ATCC 27184 / PCC 6803 / Kazusa).